We begin with the raw amino-acid sequence, 218 residues long: Small ribosomal subunit protein uS3 (218 aa).

The 69-residue stretch at 38 to 106 (IREFISKRLS…RVHINILEIK (69 aa)) folds into the KH type-2 domain.

The protein belongs to the universal ribosomal protein uS3 family. In terms of assembly, part of the 30S ribosomal subunit. Forms a tight complex with proteins S10 and S14.

Functionally, binds the lower part of the 30S subunit head. Binds mRNA in the 70S ribosome, positioning it for translation. The protein is Small ribosomal subunit protein uS3 of Bacillus pumilus (strain SAFR-032).